The primary structure comprises 429 residues: MSNLVLKNCKTIDNKIVNIIIENGIIKDIKKTILPSEKETDTICDIKENIIIPGLIDTHVHLRDPGMTQKETWTTGTQAAAHGGYTTIIDMPNTLPATDTKKAFQEKRNIATKKSYVDFGLHAGVKTRQDVMDIMSEKPASYKIFMDLYTNKQLDEMFNYVSQTNKPLSLHCEDKTLVDYNIKTMKKNPLNKNKTITYSYARSALAELIAVNRAIEFAKKYKLQLHLCHISTRQTLELIHEAKEKLNISIEATPHHIFLDNTTYERYGVKAKTNPPLRDSNYNITIDNLNEFDSIGTDHAPHTIEEKEKDTWKSAAGIPGLETALKLLLTEVNNKRLTLEQLVKLTSTNPANIFNIPNKGKIKKGYDADITVINMKETGKISIENTYTKAKYTPFENRDYVGSNIMTINRGNIISQDNDVYKYDSKYIY.

Residues His-59 and His-61 each contribute to the Zn(2+) site. Residues 61 to 63 (HLR) and Asn-93 each bind substrate. 4 residues coordinate Zn(2+): Lys-143, His-171, His-229, and Asp-298. N6-carboxylysine is present on Lys-143. Asp-298 is an active-site residue. Substrate-binding positions include His-302 and 316–317 (AG).

This sequence belongs to the metallo-dependent hydrolases superfamily. DHOase family. Class I DHOase subfamily. Requires Zn(2+) as cofactor.

The catalysed reaction is (S)-dihydroorotate + H2O = N-carbamoyl-L-aspartate + H(+). Its pathway is pyrimidine metabolism; UMP biosynthesis via de novo pathway; (S)-dihydroorotate from bicarbonate: step 3/3. In terms of biological role, catalyzes the reversible cyclization of carbamoyl aspartate to dihydroorotate. The protein is Dihydroorotase of Methanosphaera stadtmanae (strain ATCC 43021 / DSM 3091 / JCM 11832 / MCB-3).